The primary structure comprises 160 residues: uncharacterized protein (160 aa).

Over residues 1–31 the composition is skewed to basic and acidic residues; it reads METEKPNTDVKVAQDLEKLKLDEKHKDEKKD. The segment at 1–160 is disordered; that stretch reads METEKPNTDV…DKKDKEHKKE (160 aa). Residues 20 to 111 are a coiled coil; it reads KLDEKHKDEK…KSKLEGKKDK (92 aa). Residues 32–42 show a composition bias toward basic residues; that stretch reads KKDKKDKKDKK. Residues 43–160 show a composition bias toward basic and acidic residues; the sequence is DKKEKTPEEI…DKKDKEHKKE (118 aa).

This is an uncharacterized protein from Dictyostelium discoideum (Social amoeba).